The following is a 287-amino-acid chain: ATP synthase gamma chain (287 aa).

The protein belongs to the ATPase gamma chain family. As to quaternary structure, F-type ATPases have 2 components, CF(1) - the catalytic core - and CF(0) - the membrane proton channel. CF(1) has five subunits: alpha(3), beta(3), gamma(1), delta(1), epsilon(1). CF(0) has three main subunits: a, b and c.

It is found in the cell inner membrane. Its function is as follows. Produces ATP from ADP in the presence of a proton gradient across the membrane. The gamma chain is believed to be important in regulating ATPase activity and the flow of protons through the CF(0) complex. The protein is ATP synthase gamma chain of Geobacter metallireducens (strain ATCC 53774 / DSM 7210 / GS-15).